Here is a 178-residue protein sequence, read N- to C-terminus: Large ribosomal subunit protein uL6 (178 aa).

This sequence belongs to the universal ribosomal protein uL6 family. As to quaternary structure, part of the 50S ribosomal subunit.

Functionally, this protein binds to the 23S rRNA, and is important in its secondary structure. It is located near the subunit interface in the base of the L7/L12 stalk, and near the tRNA binding site of the peptidyltransferase center. This chain is Large ribosomal subunit protein uL6, found in Oenococcus oeni (strain ATCC BAA-331 / PSU-1).